A 279-amino-acid chain; its full sequence is Large ribosomal subunit protein uL2 (279 aa).

Residues 222-264 are disordered; the sequence is GVAMNPVDHPHGGGEGRTSGGRNPVTPAGKPTKGAKTRVNKAT.

The protein belongs to the universal ribosomal protein uL2 family. As to quaternary structure, part of the 50S ribosomal subunit. Forms a bridge to the 30S subunit in the 70S ribosome.

Functionally, one of the primary rRNA binding proteins. Required for association of the 30S and 50S subunits to form the 70S ribosome, for tRNA binding and peptide bond formation. It has been suggested to have peptidyltransferase activity; this is somewhat controversial. Makes several contacts with the 16S rRNA in the 70S ribosome. In Caulobacter sp. (strain K31), this protein is Large ribosomal subunit protein uL2.